Here is a 401-residue protein sequence, read N- to C-terminus: tRNA(Met) cytidine acetate ligase (401 aa).

ATP-binding positions include 7–20 (VVEYNPFHNGHLYH), Gly101, Asn160, and 185–186 (RI).

Belongs to the TmcAL family.

Its subcellular location is the cytoplasm. The catalysed reaction is cytidine(34) in elongator tRNA(Met) + acetate + ATP = N(4)-acetylcytidine(34) in elongator tRNA(Met) + AMP + diphosphate. Functionally, catalyzes the formation of N(4)-acetylcytidine (ac(4)C) at the wobble position of elongator tRNA(Met), using acetate and ATP as substrates. First activates an acetate ion to form acetyladenylate (Ac-AMP) and then transfers the acetyl group to tRNA to form ac(4)C34. The polypeptide is tRNA(Met) cytidine acetate ligase (Anoxybacillus flavithermus (strain DSM 21510 / WK1)).